Reading from the N-terminus, the 419-residue chain is Tyrosine--tRNA ligase (419 aa).

Residue tyrosine 36 coordinates L-tyrosine. The 'HIGH' region signature appears at 41–50; that stretch reads PTGDSMHIGH. The L-tyrosine site is built by tyrosine 168 and glutamine 172. Positions 230 to 234 match the 'KMSKS' region motif; sequence KFGKT. Lysine 233 contacts ATP. Residues 352-419 enclose the S4 RNA-binding domain; that stretch reads KNIVDFLVDA…KKKYFLARVK (68 aa).

It belongs to the class-I aminoacyl-tRNA synthetase family. TyrS type 1 subfamily. Homodimer.

It is found in the cytoplasm. It carries out the reaction tRNA(Tyr) + L-tyrosine + ATP = L-tyrosyl-tRNA(Tyr) + AMP + diphosphate + H(+). In terms of biological role, catalyzes the attachment of tyrosine to tRNA(Tyr) in a two-step reaction: tyrosine is first activated by ATP to form Tyr-AMP and then transferred to the acceptor end of tRNA(Tyr). The chain is Tyrosine--tRNA ligase from Latilactobacillus sakei subsp. sakei (strain 23K) (Lactobacillus sakei subsp. sakei).